Consider the following 611-residue polypeptide: Zinc metalloproteinase-disintegrin-like MTP9 (611 aa).

A signal peptide spans 1–20 (MIEVLLVTICFTVFPYQGSS). The propeptide occupies 21–191 (IILESGNVND…DEPIEKISQL (171 aa)). Positions 205–401 (KYIELYVVVD…VRPQCILNKP (197 aa)) constitute a Peptidase M12B domain. Glu208 lines the Ca(2+) pocket. Asn282 carries N-linked (GlcNAc...) asparagine glycosylation. Position 292 (Asp292) interacts with Ca(2+). 3 disulfide bridges follow: Cys316–Cys396, Cys356–Cys380, and Cys358–Cys363. Positions 341, 345, and 351 each coordinate Zn(2+). Ca(2+)-binding residues include Cys396, Asn399, Asn414, Phe416, Glu418, Glu421, and Asp424. In terms of domain architecture, Disintegrin spans 409-493 (PPVCGNYFVE…ECPTDSFQRN (85 aa)). 15 disulfides stabilise this stretch: Cys412-Cys441, Cys423-Cys436, Cys425-Cys431, Cys435-Cys456, Cys447-Cys453, Cys452-Cys478, Cys465-Cys485, Cys472-Cys504, Cys497-Cys509, Cys516-Cys566, Cys531-Cys573, Cys541-Cys575, Cys544-Cys554, Cys561-Cys599, and Cys593-Cys604. A D/ECD-tripeptide motif is present at residues 471–473 (DCD). Residues Asp473, Leu474, Glu476, and Asp488 each coordinate Ca(2+). Residues Asn548 and Asn570 are each glycosylated (N-linked (GlcNAc...) asparagine).

It belongs to the venom metalloproteinase (M12B) family. P-III subfamily. In terms of assembly, monomer. It depends on Zn(2+) as a cofactor. As to expression, expressed by the venom gland.

It is found in the secreted. Functionally, snake venom zinc metalloproteinase that may impair hemostasis in the prey. This chain is Zinc metalloproteinase-disintegrin-like MTP9, found in Drysdalia coronoides (White-lipped snake).